Here is a 171-residue protein sequence, read N- to C-terminus: 3-hydroxydecanoyl-[acyl-carrier-protein] dehydratase (171 aa).

The active site involves histidine 70.

Belongs to the thioester dehydratase family. FabA subfamily. In terms of assembly, homodimer.

Its subcellular location is the cytoplasm. It catalyses the reaction a (3R)-hydroxyacyl-[ACP] = a (2E)-enoyl-[ACP] + H2O. It carries out the reaction (3R)-hydroxydecanoyl-[ACP] = (2E)-decenoyl-[ACP] + H2O. The catalysed reaction is (2E)-decenoyl-[ACP] = (3Z)-decenoyl-[ACP]. It functions in the pathway lipid metabolism; fatty acid biosynthesis. Functionally, necessary for the introduction of cis unsaturation into fatty acids. Catalyzes the dehydration of (3R)-3-hydroxydecanoyl-ACP to E-(2)-decenoyl-ACP and then its isomerization to Z-(3)-decenoyl-ACP. Can catalyze the dehydratase reaction for beta-hydroxyacyl-ACPs with saturated chain lengths up to 16:0, being most active on intermediate chain length. This chain is 3-hydroxydecanoyl-[acyl-carrier-protein] dehydratase, found in Shewanella oneidensis (strain ATCC 700550 / JCM 31522 / CIP 106686 / LMG 19005 / NCIMB 14063 / MR-1).